A 361-amino-acid chain; its full sequence is Chorismate synthase (361 aa).

NADP(+)-binding residues include arginine 48 and arginine 54. Residues 125 to 127, 238 to 239, glycine 278, 293 to 297, and arginine 319 contribute to the FMN site; these read RSS, NA, and KPTSS.

This sequence belongs to the chorismate synthase family. As to quaternary structure, homotetramer. Requires FMNH2 as cofactor.

It carries out the reaction 5-O-(1-carboxyvinyl)-3-phosphoshikimate = chorismate + phosphate. Its pathway is metabolic intermediate biosynthesis; chorismate biosynthesis; chorismate from D-erythrose 4-phosphate and phosphoenolpyruvate: step 7/7. Functionally, catalyzes the anti-1,4-elimination of the C-3 phosphate and the C-6 proR hydrogen from 5-enolpyruvylshikimate-3-phosphate (EPSP) to yield chorismate, which is the branch point compound that serves as the starting substrate for the three terminal pathways of aromatic amino acid biosynthesis. This reaction introduces a second double bond into the aromatic ring system. The protein is Chorismate synthase of Escherichia coli O139:H28 (strain E24377A / ETEC).